A 319-amino-acid polypeptide reads, in one-letter code: Malate dehydrogenase (319 aa).

Residues G10–G15 and D34 contribute to the NAD(+) site. R85 and R91 together coordinate substrate. Residues N98 and I121–N123 each bind NAD(+). The substrate site is built by N123 and R154. H178 functions as the Proton acceptor in the catalytic mechanism.

This sequence belongs to the LDH/MDH superfamily. MDH type 3 family.

It carries out the reaction (S)-malate + NAD(+) = oxaloacetate + NADH + H(+). In terms of biological role, catalyzes the reversible oxidation of malate to oxaloacetate. The sequence is that of Malate dehydrogenase from Rhodospirillum centenum (strain ATCC 51521 / SW).